The chain runs to 388 residues: 1-deoxy-D-xylulose 5-phosphate reductoisomerase (388 aa).

NADPH contacts are provided by Thr-15, Gly-16, Ser-17, Ile-18, and Asn-127. Position 128 (Lys-128) interacts with 1-deoxy-D-xylulose 5-phosphate. Glu-129 is an NADPH binding site. Asp-153 serves as a coordination point for Mn(2+). 1-deoxy-D-xylulose 5-phosphate is bound by residues Ser-154, Glu-155, Ser-179, and His-202. A Mn(2+)-binding site is contributed by Glu-155. NADPH is bound at residue Gly-208. Ser-215, Asn-220, Lys-221, and Glu-224 together coordinate 1-deoxy-D-xylulose 5-phosphate. Glu-224 contributes to the Mn(2+) binding site.

It belongs to the DXR family. Mg(2+) is required as a cofactor. It depends on Mn(2+) as a cofactor.

It catalyses the reaction 2-C-methyl-D-erythritol 4-phosphate + NADP(+) = 1-deoxy-D-xylulose 5-phosphate + NADPH + H(+). It participates in isoprenoid biosynthesis; isopentenyl diphosphate biosynthesis via DXP pathway; isopentenyl diphosphate from 1-deoxy-D-xylulose 5-phosphate: step 1/6. Functionally, catalyzes the NADPH-dependent rearrangement and reduction of 1-deoxy-D-xylulose-5-phosphate (DXP) to 2-C-methyl-D-erythritol 4-phosphate (MEP). This is 1-deoxy-D-xylulose 5-phosphate reductoisomerase from Bacteroides fragilis (strain YCH46).